The primary structure comprises 323 residues: Acetyl-coenzyme A carboxylase carboxyl transferase subunit alpha (323 aa).

In terms of domain architecture, CoA carboxyltransferase C-terminal spans 39 to 293 (RLSKKSQQLT…RRALADSLRQ (255 aa)).

This sequence belongs to the AccA family. As to quaternary structure, acetyl-CoA carboxylase is a heterohexamer composed of biotin carboxyl carrier protein (AccB), biotin carboxylase (AccC) and two subunits each of ACCase subunit alpha (AccA) and ACCase subunit beta (AccD).

The protein localises to the cytoplasm. It catalyses the reaction N(6)-carboxybiotinyl-L-lysyl-[protein] + acetyl-CoA = N(6)-biotinyl-L-lysyl-[protein] + malonyl-CoA. It functions in the pathway lipid metabolism; malonyl-CoA biosynthesis; malonyl-CoA from acetyl-CoA: step 1/1. In terms of biological role, component of the acetyl coenzyme A carboxylase (ACC) complex. First, biotin carboxylase catalyzes the carboxylation of biotin on its carrier protein (BCCP) and then the CO(2) group is transferred by the carboxyltransferase to acetyl-CoA to form malonyl-CoA. This chain is Acetyl-coenzyme A carboxylase carboxyl transferase subunit alpha, found in Burkholderia multivorans (strain ATCC 17616 / 249).